Here is a 334-residue protein sequence, read N- to C-terminus: MQLDNILSQLFENQALTKAESQYFFEQVIQGNVSNEQLAGALIALKVRGETIEEIAGAVEAAFANATAFPAPDYAFADIVGTGGDGQNTINISTASAIVAATLGYKVAKHGSRSVSSKTGASDVLSALGINVAISPQTARQALDENNLCFLFAPLYHAGFKHAVPVRQVLKTRTLFNILGPLVNPAHAKRQLLGVYSPEVLKIYAETVRSLNHQHSIVVHGAGLDEVTVHGETLVAEIEHGEIHYFSLTPEDFGIQRHSIEALKGGEPAENAEKITALLQGKGEAAHIDAVAVNTAMLMRTFGERDLKANVQRVKDLLSTDKAYQTLQNLAQYQ.

5-phospho-alpha-D-ribose 1-diphosphate contacts are provided by residues Gly-81, 84 to 85 (GD), Thr-89, 91 to 94 (NIST), 109 to 117 (KHGSRSVSS), and Ala-121. Gly-81 contacts anthranilate. Ser-93 is a binding site for Mg(2+). Arg-167 provides a ligand contact to anthranilate. Residues Asp-225 and Glu-226 each coordinate Mg(2+).

The protein belongs to the anthranilate phosphoribosyltransferase family. As to quaternary structure, homodimer. Mg(2+) is required as a cofactor.

It catalyses the reaction N-(5-phospho-beta-D-ribosyl)anthranilate + diphosphate = 5-phospho-alpha-D-ribose 1-diphosphate + anthranilate. It functions in the pathway amino-acid biosynthesis; L-tryptophan biosynthesis; L-tryptophan from chorismate: step 2/5. In terms of biological role, catalyzes the transfer of the phosphoribosyl group of 5-phosphorylribose-1-pyrophosphate (PRPP) to anthranilate to yield N-(5'-phosphoribosyl)-anthranilate (PRA). This is Anthranilate phosphoribosyltransferase from Actinobacillus pleuropneumoniae serotype 7 (strain AP76).